The chain runs to 372 residues: uncharacterized protein (372 aa).

Residues 49–72 (FSHKGGGKGGGSGAGSNDGGCSGE) form a disordered region. Positions 55 to 70 (GKGGGSGAGSNDGGCS) are enriched in gly residues.

This is an uncharacterized protein from Halorubrum lacusprofundi (strain ATCC 49239 / DSM 5036 / JCM 8891 / ACAM 34).